Consider the following 62-residue polypeptide: Conotoxin Lt5.8 (62 aa).

The N-terminal stretch at 1–19 (MLCLPVFIILLLLVSPAAT) is a signal peptide. Residues 20–47 (MPVDLEILKAPTKESRKDFEMRIELLRS) constitute a propeptide that is removed on maturation. Glutamine 50 is subject to Pyrrolidone carboxylic acid. Glutamine amide is present on glutamine 61.

This sequence belongs to the conotoxin T superfamily. In terms of processing, contains 2 disulfide bonds that can be either 'C1-C3, C2-C4' or 'C1-C4, C2-C3', since these disulfide connectivities have been observed for conotoxins with cysteine framework V (for examples, see AC P0DQQ7 and AC P81755). In terms of tissue distribution, expressed by the venom duct.

It localises to the secreted. The sequence is that of Conotoxin Lt5.8 from Conus litteratus (Lettered cone).